The chain runs to 356 residues: Dual-specificity RNA methyltransferase RlmN (356 aa).

Residue glutamate 89 is the Proton acceptor of the active site. The 234-residue stretch at 108-341 folds into the Radical SAM core domain; that stretch reads SHARYTICVS…CTIRESKGLD (234 aa). Cysteine 115 and cysteine 346 form a disulfide bridge. [4Fe-4S] cluster contacts are provided by cysteine 122, cysteine 126, and cysteine 129. S-adenosyl-L-methionine-binding positions include 172-173, serine 204, 227-229, and asparagine 303; these read GE and SLH. Cysteine 346 (S-methylcysteine intermediate) is an active-site residue.

Belongs to the radical SAM superfamily. RlmN family. The cofactor is [4Fe-4S] cluster.

The protein localises to the cytoplasm. It catalyses the reaction adenosine(2503) in 23S rRNA + 2 reduced [2Fe-2S]-[ferredoxin] + 2 S-adenosyl-L-methionine = 2-methyladenosine(2503) in 23S rRNA + 5'-deoxyadenosine + L-methionine + 2 oxidized [2Fe-2S]-[ferredoxin] + S-adenosyl-L-homocysteine. The catalysed reaction is adenosine(37) in tRNA + 2 reduced [2Fe-2S]-[ferredoxin] + 2 S-adenosyl-L-methionine = 2-methyladenosine(37) in tRNA + 5'-deoxyadenosine + L-methionine + 2 oxidized [2Fe-2S]-[ferredoxin] + S-adenosyl-L-homocysteine. Functionally, specifically methylates position 2 of adenine 2503 in 23S rRNA and position 2 of adenine 37 in tRNAs. m2A2503 modification seems to play a crucial role in the proofreading step occurring at the peptidyl transferase center and thus would serve to optimize ribosomal fidelity. The polypeptide is Dual-specificity RNA methyltransferase RlmN (Campylobacter jejuni (strain RM1221)).